A 674-amino-acid polypeptide reads, in one-letter code: Tripartite terminase subunit 3 (674 aa).

The Walker A motif signature appears at 212-219 (VPRRHGKT). Residues 305-310 (LLLVDE) carry the Walker B motif motif. Glu310 acts as the For ATPase activity in catalysis. Residues Asp463, Glu534, and Asp651 each act as for nuclease activity in the active site.

It belongs to the herpesviridae TRM3 protein family. Interacts with the terminase subunits TRM1 and TRM2. Interacts with portal protein.

The protein resides in the host nucleus. Functionally, component of the molecular motor that translocates viral genomic DNA in empty capsid during DNA packaging. Forms a tripartite terminase complex together with TRM1 and TRM2 in the host cytoplasm. Once the complex reaches the host nucleus, it interacts with the capsid portal vertex. This portal forms a ring in which genomic DNA is translocated into the capsid. TRM3 carries an RNase H-like nuclease activity that plays an important role for the cleavage of concatemeric viral DNA into unit length genomes. This Homo sapiens (Human) protein is Tripartite terminase subunit 3.